Here is a 378-residue protein sequence, read N- to C-terminus: MKILVDENMPYARELFSRLGDVQAVPGRPLPRDLLAGADALMVRSVTKVNADLLSGSAVKFVGSATAGTDHVDDTWLNANGIAFSAAPGCNAIAVVEYVFSSLLMLAERDGFQLRDKTVGIVGVGNVGRRLDARLKAWGVKTLLCDPPRADRGDAGDFLPLETLVRDADILTLHTPLYLDGPYRTHHLVDASVLDAFADGRILINACRGPVVDNAALLEALQRGKKLSVILDVWEPEPELSTDLLARVDIGTAHIAGYTLEGKARGTTQVFEAWSEFIGTPQQVALSSLLPEPEYAEVTLTVPLDEALLKRLVHLVYDVRRDDALLRHVAHQEGEFDRLRKHYQERREWSSLHVICADADSADCLNALGFTASVRGAR.

2 residues coordinate substrate: Ser-45 and Thr-66. Positions 146 and 175 each coordinate NAD(+). Residue Arg-208 is part of the active site. Asp-232 serves as a coordination point for NAD(+). The active site involves Glu-237. His-254 (proton donor) is an active-site residue. Gly-257 serves as a coordination point for NAD(+). Tyr-258 contacts substrate.

Belongs to the D-isomer specific 2-hydroxyacid dehydrogenase family. PdxB subfamily. In terms of assembly, homodimer.

The protein localises to the cytoplasm. It catalyses the reaction 4-phospho-D-erythronate + NAD(+) = (R)-3-hydroxy-2-oxo-4-phosphooxybutanoate + NADH + H(+). It functions in the pathway cofactor biosynthesis; pyridoxine 5'-phosphate biosynthesis; pyridoxine 5'-phosphate from D-erythrose 4-phosphate: step 2/5. In terms of biological role, catalyzes the oxidation of erythronate-4-phosphate to 3-hydroxy-2-oxo-4-phosphonooxybutanoate. The chain is Erythronate-4-phosphate dehydrogenase from Pectobacterium carotovorum subsp. carotovorum (strain PC1).